A 216-amino-acid chain; its full sequence is Adenylate kinase (216 aa).

Residue 10-15 coordinates ATP; the sequence is GSGKGT. An NMP region spans residues 30–59; the sequence is STGEILRKEIKKNKKTKKYIKKTINKGKLI. Residues T31, R36, 57–59, 85–88, and Q92 each bind AMP; these read KLI and GFPR. The LID stretch occupies residues 121–158; sequence GRLIHASSGRTYHKIFNPPKIKNKDDITQEKLCSRNDD. ATP contacts are provided by residues R122 and 131–132; that span reads TY. R155 and R166 together coordinate AMP. Q196 serves as a coordination point for ATP.

Belongs to the adenylate kinase family. In terms of assembly, monomer.

The protein resides in the cytoplasm. The catalysed reaction is AMP + ATP = 2 ADP. Its pathway is purine metabolism; AMP biosynthesis via salvage pathway; AMP from ADP: step 1/1. Catalyzes the reversible transfer of the terminal phosphate group between ATP and AMP. Plays an important role in cellular energy homeostasis and in adenine nucleotide metabolism. This Buchnera aphidicola subsp. Cinara cedri (strain Cc) protein is Adenylate kinase.